The sequence spans 389 residues: Large ribosomal subunit protein uL3 (389 aa).

Belongs to the universal ribosomal protein uL3 family.

The protein localises to the cytoplasm. The protein is Large ribosomal subunit protein uL3 (RPL3) of Debaryomyces hansenii (strain ATCC 36239 / CBS 767 / BCRC 21394 / JCM 1990 / NBRC 0083 / IGC 2968) (Yeast).